Here is a 285-residue protein sequence, read N- to C-terminus: CCR4-NOT transcription complex subunit 7 (285 aa).

Residues aspartate 40, glutamate 42, aspartate 161, aspartate 230, and glutamate 278 each coordinate a divalent metal cation.

This sequence belongs to the CAF1 family. As to quaternary structure, component of the CCR4-NOT complex; distinct complexes seem to exist that differ in the participation of probably mutually exclusive catalytic subunits; the complex contains two deadenylase subunits, CNOT6 or CNOT6L, and CNOT7 or CNOT8. In the complex, interacts directly with CNOT1. Interacts with AGO2. Interacts with TOB1; recruited by TOB1 to a ternary complex with CPEB3 which is required for mRNA deadenylation and decay. Interacts with BTG1. Interacts with BTG2. Interacts with NANOS2. Interacts with ZFP36, ZFP36L1 and ZFP36L2; these interactions are inhibited in response to phorbol 12-myristate 13-acetate (PMA) treatment in a p38 MAPK-dependent manner. Interacts with BTG4. Interacts with EIF4E; this interaction is increased by CNOT7 interaction with BTG4. The cofactor is Mn(2+). It depends on Mg(2+) as a cofactor. Co(2+) serves as cofactor.

It is found in the nucleus. The protein localises to the cytoplasm. The protein resides in the P-body. It localises to the cytoplasmic ribonucleoprotein granule. It catalyses the reaction Exonucleolytic cleavage of poly(A) to 5'-AMP.. Has 3'-5' poly(A) exoribonuclease activity for synthetic poly(A) RNA substrate. Its function seems to be partially redundant with that of CNOT8. Catalytic component of the CCR4-NOT complex which is one of the major cellular mRNA deadenylases and is linked to various cellular processes including bulk mRNA degradation, miRNA-mediated repression, translational repression during translational initiation and general transcription regulation. During miRNA-mediated repression the complex also seems to act as translational repressor during translational initiation. Additional complex functions may be a consequence of its influence on mRNA expression. Required for miRNA-mediated mRNA deadenylation. Associates with members of the BTG family such as TOB1 and BTG2 and is required for their anti-proliferative activity. The sequence is that of CCR4-NOT transcription complex subunit 7 (CNOT7) from Bos taurus (Bovine).